We begin with the raw amino-acid sequence, 350 residues long: NADH-cytochrome b5 reductase 2 (350 aa).

A helical membrane pass occupies residues 43 to 63; it reads PLVLALGGVAGIGAWYGLGGF. In terms of domain architecture, FAD-binding FR-type spans 96-204; it reads DQFVEFTLKE…KGPIAKFAYK (109 aa). Residue 207-242 participates in FAD binding; sequence EFESIGMIAGGSGITPMYQVIQDIASNPSDKTKVTL.

This sequence belongs to the flavoprotein pyridine nucleotide cytochrome reductase family. It depends on FAD as a cofactor.

The protein localises to the mitochondrion outer membrane. The enzyme catalyses 2 Fe(III)-[cytochrome b5] + NADH = 2 Fe(II)-[cytochrome b5] + NAD(+) + H(+). May mediate the reduction of outer membrane cytochrome b5. In Mycosarcoma maydis (Corn smut fungus), this protein is NADH-cytochrome b5 reductase 2 (MCR1).